The following is a 291-amino-acid chain: uncharacterized protein (291 aa).

The 99-residue stretch at 191–289 folds into the HTH araC/xylS-type domain; the sequence is KQMLNWIHLH…NMTPLSYKKM (99 aa). DNA-binding regions (H-T-H motif) lie at residues 208 to 229 and 256 to 279; these read EDIA…KRML and VTEV…QQAM.

This is an uncharacterized protein from Bacillus subtilis (strain 168).